The chain runs to 137 residues: Large ribosomal subunit protein uL16 (137 aa).

It belongs to the universal ribosomal protein uL16 family. As to quaternary structure, part of the 50S ribosomal subunit.

Binds 23S rRNA and is also seen to make contacts with the A and possibly P site tRNAs. This Alkalilimnicola ehrlichii (strain ATCC BAA-1101 / DSM 17681 / MLHE-1) protein is Large ribosomal subunit protein uL16.